A 3135-amino-acid polypeptide reads, in one-letter code: Beauvericin nonribosomal cyclodepsipeptide synthetase BEA1 (3135 aa).

Residues 70–458 (HVAYEISNDI…QRLRGSPDKL (389 aa)) form a condensation 1 region. Residues 196–228 (LSNRPYTPESSDPEDDGLSLTPTDGSKTPETEG) are disordered. Residues 499 to 896 (SLSPSKVAIC…GRMDSQVKIR (398 aa)) are adenylation 1. The Carrier 1 domain maps to 1021–1097 (STTTSSQSKL…GLEAIVNGSA (77 aa)). Serine 1058 bears the O-(pantetheine 4'-phosphoryl)serine mark. Positions 1115–1542 (SYSQGRLWFL…NIPISVLPLT (428 aa)) are condensation 2. Residues 1571–1974 (FRTQVAAYPD…GRMDTQFKIR (404 aa)) form an adenylation 2 region. The interval 2042–2182 (MYADIGDIDP…FPSPEYLAQV (141 aa)) is S-adenosyl-L-methionine-dependent N-methyltransferase. Carrier domains follow at residues 2509–2583 (VPIS…REGL) and 2603–2677 (APRT…ESTD). Residues serine 2543 and serine 2637 each carry the O-(pantetheine 4'-phosphoryl)serine modification. A condensation 3 region spans residues 2721–3127 (QDMYQSTQMQ…QYFLEEVCNT (407 aa)).

The protein belongs to the NRP synthetase family.

The catalysed reaction is 3 (R)-2-hydroxy-3-methylbutanoate + 3 L-phenylalanine + 3 S-adenosyl-L-methionine + 6 ATP = beauvericin + 6 AMP + 3 S-adenosyl-L-homocysteine + 6 diphosphate + 6 H(+). Beauvericin nonribosomal cyclodepsipeptide synthetase; part of the gene cluster that mediates the biosynthesis of beauvericin (BEA), a non-ribosomal cyclic hexadepsipeptide that shows antibiotic, antifungal, insecticidal, and cancer cell antiproliferative and antihaptotactic activity. Ketoisovalerate reductase BEA2 catalyzes the NADPH-specific reduction of ketoisovaleric acid to hydroxyisovalerate, a precursor for beauvericin biosynthesis. The nonribosomal cyclodepsipeptide synthetase BEA1 then catalyzes the formation of beauvericin via condensation and cyclization of 3 dipeptidol monomers, each composed of one unit of hydroxyisovalerate and one unit of N-methyl-phenylalanine. In Gibberella fujikuroi (strain CBS 195.34 / IMI 58289 / NRRL A-6831) (Bakanae and foot rot disease fungus), this protein is Beauvericin nonribosomal cyclodepsipeptide synthetase BEA1.